Consider the following 58-residue polypeptide: Large ribosomal subunit protein bL32 (58 aa).

The interval 1-23 (MAVPARHTSSAKKNRRRTHYKLT) is disordered. Positions 9-20 (SSAKKNRRRTHY) are enriched in basic residues.

This sequence belongs to the bacterial ribosomal protein bL32 family.

The polypeptide is Large ribosomal subunit protein bL32 (rpmF) (Lactococcus lactis subsp. cremoris (Streptococcus cremoris)).